A 200-amino-acid chain; its full sequence is UPF0301 protein BruAb1_0502 (200 aa).

It belongs to the UPF0301 (AlgH) family.

This chain is UPF0301 protein BruAb1_0502, found in Brucella abortus biovar 1 (strain 9-941).